A 612-amino-acid chain; its full sequence is Probable serine/threonine-protein kinase WNK4 (612 aa).

In terms of domain architecture, Protein kinase spans 25–282; sequence IRYNEVLGRG…AKELLQDPFL (258 aa). ATP-binding positions include 105–108 and Lys155; that span reads TELF. The Proton acceptor role is filled by Asp172.

It belongs to the protein kinase superfamily. Ser/Thr protein kinase family. WNK subfamily.

It catalyses the reaction L-seryl-[protein] + ATP = O-phospho-L-seryl-[protein] + ADP + H(+). It carries out the reaction L-threonyl-[protein] + ATP = O-phospho-L-threonyl-[protein] + ADP + H(+). In Oryza sativa subsp. japonica (Rice), this protein is Probable serine/threonine-protein kinase WNK4 (WNK4).